Consider the following 215-residue polypeptide: Ribose-5-phosphate isomerase A (215 aa).

Residues 26 to 29 (TGST), 79 to 82 (DGAD), and 92 to 95 (KGGG) each bind substrate. Catalysis depends on E101, which acts as the Proton acceptor. K119 provides a ligand contact to substrate.

It belongs to the ribose 5-phosphate isomerase family. Homodimer.

It catalyses the reaction aldehydo-D-ribose 5-phosphate = D-ribulose 5-phosphate. It functions in the pathway carbohydrate degradation; pentose phosphate pathway; D-ribose 5-phosphate from D-ribulose 5-phosphate (non-oxidative stage): step 1/1. Its function is as follows. Catalyzes the reversible conversion of ribose-5-phosphate to ribulose 5-phosphate. The polypeptide is Ribose-5-phosphate isomerase A (Xanthomonas campestris pv. campestris (strain 8004)).